A 295-amino-acid polypeptide reads, in one-letter code: MNNIIDGKALANEILEDLKLEIQELKSQTNASPKLAIVLVGDNPASIIYVKNKIKNAHKIGIDTLLVNLSTTIHTNDLITKINELNHDNEISGMIVQLPLPNSIDKNKILSAVSPYKDVDGFHPLNVGYLHSGIIDVSEFSQSFIPCTALGCLAVIKKYEPNLSGKHVVVIGRSNIVGKPLSALLLKEDCSVTICHSKTHNLGSIALKADIVVAAIGSPLKLTAEYFNPESIVIDVGINRISGNKIIGDVDFEHVKSKVKYITPVPGGIGPMTIAFLLKNTVKAFKDSYSTVCHL.

NADP(+)-binding positions include 172 to 174 (GRS), S197, and I238.

Belongs to the tetrahydrofolate dehydrogenase/cyclohydrolase family. In terms of assembly, homodimer.

It catalyses the reaction (6R)-5,10-methylene-5,6,7,8-tetrahydrofolate + NADP(+) = (6R)-5,10-methenyltetrahydrofolate + NADPH. It carries out the reaction (6R)-5,10-methenyltetrahydrofolate + H2O = (6R)-10-formyltetrahydrofolate + H(+). It participates in one-carbon metabolism; tetrahydrofolate interconversion. Its function is as follows. Catalyzes the oxidation of 5,10-methylenetetrahydrofolate to 5,10-methenyltetrahydrofolate and then the hydrolysis of 5,10-methenyltetrahydrofolate to 10-formyltetrahydrofolate. The polypeptide is Bifunctional protein FolD (Rickettsia akari (strain Hartford)).